An 872-amino-acid polypeptide reads, in one-letter code: Valine--tRNA ligase (872 aa).

The short motif at P45 to N55 is the 'HIGH' region element. Residues K524–S528 carry the 'KMSKS' region motif. ATP is bound at residue K527.

The protein belongs to the class-I aminoacyl-tRNA synthetase family. ValS type 2 subfamily.

It localises to the cytoplasm. The enzyme catalyses tRNA(Val) + L-valine + ATP = L-valyl-tRNA(Val) + AMP + diphosphate. Functionally, catalyzes the attachment of valine to tRNA(Val). As ValRS can inadvertently accommodate and process structurally similar amino acids such as threonine, to avoid such errors, it has a 'posttransfer' editing activity that hydrolyzes mischarged Thr-tRNA(Val) in a tRNA-dependent manner. The sequence is that of Valine--tRNA ligase from Natronomonas pharaonis (strain ATCC 35678 / DSM 2160 / CIP 103997 / JCM 8858 / NBRC 14720 / NCIMB 2260 / Gabara) (Halobacterium pharaonis).